The primary structure comprises 226 residues: 2-C-methyl-D-erythritol 4-phosphate cytidylyltransferase (226 aa).

This sequence belongs to the IspD/TarI cytidylyltransferase family. IspD subfamily.

It catalyses the reaction 2-C-methyl-D-erythritol 4-phosphate + CTP + H(+) = 4-CDP-2-C-methyl-D-erythritol + diphosphate. It functions in the pathway isoprenoid biosynthesis; isopentenyl diphosphate biosynthesis via DXP pathway; isopentenyl diphosphate from 1-deoxy-D-xylulose 5-phosphate: step 2/6. Its function is as follows. Catalyzes the formation of 4-diphosphocytidyl-2-C-methyl-D-erythritol from CTP and 2-C-methyl-D-erythritol 4-phosphate (MEP). This Bacillus mycoides (strain KBAB4) (Bacillus weihenstephanensis) protein is 2-C-methyl-D-erythritol 4-phosphate cytidylyltransferase.